A 562-amino-acid polypeptide reads, in one-letter code: Endoglucanase E1 (562 aa).

The N-terminal stretch at Met-1–Ala-41 is a signal peptide. A catalytic region spans residues Ala-42–Gly-400. The cysteines at positions 75 and 161 are disulfide-linked. The active-site Proton donor is the Glu-203. A disulfide bridge connects residues Cys-209 and Cys-212. The active-site Nucleophile is the Glu-323. Residues Val-399–Gly-462 form a disordered region. Composition is skewed to low complexity over residues Ala-401–Pro-411 and Pro-437–Pro-449. The 105-residue stretch at Thr-458–Ser-562 folds into the CBM2 domain.

It belongs to the glycosyl hydrolase 5 (cellulase A) family.

It carries out the reaction Endohydrolysis of (1-&gt;4)-beta-D-glucosidic linkages in cellulose, lichenin and cereal beta-D-glucans.. Functionally, has a very high specific activity on carboxymethylcellulose. The chain is Endoglucanase E1 from Acidothermus cellulolyticus (strain ATCC 43068 / DSM 8971 / 11B).